The chain runs to 411 residues: LL-diaminopimelate aminotransferase (411 aa).

Positions 15 and 42 each coordinate substrate. Pyridoxal 5'-phosphate is bound by residues Y72, 108–109 (AK), Y132, N188, Y219, and 247–249 (SFS). Residues K109, Y132, and N188 each coordinate substrate. Residue K250 is modified to N6-(pyridoxal phosphate)lysine. Pyridoxal 5'-phosphate is bound by residues R258 and N293. Substrate contacts are provided by N293 and R389.

This sequence belongs to the class-I pyridoxal-phosphate-dependent aminotransferase family. LL-diaminopimelate aminotransferase subfamily. In terms of assembly, homodimer. Requires pyridoxal 5'-phosphate as cofactor.

It catalyses the reaction (2S,6S)-2,6-diaminopimelate + 2-oxoglutarate = (S)-2,3,4,5-tetrahydrodipicolinate + L-glutamate + H2O + H(+). Its pathway is amino-acid biosynthesis; L-lysine biosynthesis via DAP pathway; LL-2,6-diaminopimelate from (S)-tetrahydrodipicolinate (aminotransferase route): step 1/1. In terms of biological role, involved in the synthesis of meso-diaminopimelate (m-DAP or DL-DAP), required for both lysine and peptidoglycan biosynthesis. Catalyzes the direct conversion of tetrahydrodipicolinate to LL-diaminopimelate. The protein is LL-diaminopimelate aminotransferase of Desulfitobacterium hafniense (strain Y51).